Reading from the N-terminus, the 222-residue chain is Collectrin (222 aa).

The first 14 residues, 1–14 (MLWLLFFLVTAIHA), serve as a signal peptide directing secretion. Topologically, residues 15-141 (DLCRPDAENA…LAPPTDPSVP (127 aa)) are extracellular. The Collectrin-like domain occupies 21–222 (AENAFKVRLS…VTEDERLTPL (202 aa)). N-linked (GlcNAc...) asparagine glycosylation is found at N76 and N93. Residues 142–162 (IWIIIFGVIFCIVLVATMLLI) traverse the membrane as a helical segment. At 163–222 (ISGIRQHRRKNKGPSEMEDSEDKCENVITIENGIPCDPLDMKGGHINDAFVTEDERLTPL) the chain is on the cytoplasmic side. Phosphothreonine is present on residues T214 and T220.

This sequence belongs to the CLTRN family. In terms of assembly, monomer. Homodimer; dimerization prevents CLTRN cleavage by BACE2. Interacts with SLC6A18; this interaction regulates the trafficking of SLC6A18 to the cell membrane and its amino acid transporter activity. Interacts with SLC6A19; this interaction regulates the trafficking of SLC6A19 to the cell membrane and its amino acid transporter activity. Interacts with SNAPIN. In terms of processing, glycosylated. Glycosylation is required for plasma membrane localization and for its cleavage by BACE2. Proteolytically processed in pancreatic beta cells by BACE2 leading to the generation and extracellular release of soluble CLTRN, and a corresponding cell-associated C-terminal fragment which is later cleaved by gamma-secretase. This shedding process inactivates CLTRN. Three cleavage sites have been identified for BACE2, two clustered sites after Phe-116 and Leu-118 and a more membrane proximal site at Phe-125; the preferred BACE2 cleavage site seems to be between Phe-125 and Leu-126, Phe-116 and Leu-118 act as alternative sites.

The protein localises to the cell membrane. In terms of biological role, plays an important role in amino acid transport by acting as binding partner of amino acid transporters SLC6A18 and SLC6A19, regulating their trafficking on the cell surface and their activity. May also play a role in trafficking of amino acid transporters SLC3A1 and SLC7A9 to the renal cortical cell membrane. Regulator of SNARE complex function. Stimulator of beta cell replication. The chain is Collectrin (CLTRN) from Bos taurus (Bovine).